Here is a 191-residue protein sequence, read N- to C-terminus: Molybdenum cofactor guanylyltransferase (191 aa).

Residues 11–13 (LCG), lysine 23, aspartate 66, and aspartate 97 each bind GTP. Aspartate 97 contributes to the Mg(2+) binding site.

This sequence belongs to the MobA family. As to quaternary structure, monomer. Requires Mg(2+) as cofactor.

The protein resides in the cytoplasm. The catalysed reaction is Mo-molybdopterin + GTP + H(+) = Mo-molybdopterin guanine dinucleotide + diphosphate. Functionally, transfers a GMP moiety from GTP to Mo-molybdopterin (Mo-MPT) cofactor (Moco or molybdenum cofactor) to form Mo-molybdopterin guanine dinucleotide (Mo-MGD) cofactor. This is Molybdenum cofactor guanylyltransferase from Campylobacter jejuni subsp. jejuni serotype O:6 (strain 81116 / NCTC 11828).